A 147-amino-acid polypeptide reads, in one-letter code: Cyanate hydratase (147 aa).

Active-site residues include Arg88, Glu91, and Ser114.

The protein belongs to the cyanase family.

The enzyme catalyses cyanate + hydrogencarbonate + 3 H(+) = NH4(+) + 2 CO2. In terms of biological role, catalyzes the reaction of cyanate with bicarbonate to produce ammonia and carbon dioxide. This Variovorax paradoxus (strain S110) protein is Cyanate hydratase.